We begin with the raw amino-acid sequence, 157 residues long: 2-C-methyl-D-erythritol 2,4-cyclodiphosphate synthase (157 aa).

A divalent metal cation contacts are provided by aspartate 8 and histidine 10. Residues 8–10 and 34–35 each bind 4-CDP-2-C-methyl-D-erythritol 2-phosphate; these read DVH and HS. An a divalent metal cation-binding site is contributed by histidine 42. 4-CDP-2-C-methyl-D-erythritol 2-phosphate contacts are provided by residues 56-58, 61-65, 100-106, 132-135, phenylalanine 139, and arginine 142; these read DIG, FPDTD, AQAPKMA, and TTTE.

It belongs to the IspF family. As to quaternary structure, homotrimer. A divalent metal cation serves as cofactor.

The catalysed reaction is 4-CDP-2-C-methyl-D-erythritol 2-phosphate = 2-C-methyl-D-erythritol 2,4-cyclic diphosphate + CMP. Its pathway is isoprenoid biosynthesis; isopentenyl diphosphate biosynthesis via DXP pathway; isopentenyl diphosphate from 1-deoxy-D-xylulose 5-phosphate: step 4/6. Its function is as follows. Involved in the biosynthesis of isopentenyl diphosphate (IPP) and dimethylallyl diphosphate (DMAPP), two major building blocks of isoprenoid compounds. Catalyzes the conversion of 4-diphosphocytidyl-2-C-methyl-D-erythritol 2-phosphate (CDP-ME2P) to 2-C-methyl-D-erythritol 2,4-cyclodiphosphate (ME-CPP) with a corresponding release of cytidine 5-monophosphate (CMP). The chain is 2-C-methyl-D-erythritol 2,4-cyclodiphosphate synthase from Edwardsiella ictaluri (strain 93-146).